A 400-amino-acid chain; its full sequence is Subtilisin-like protease 7 (400 aa).

A signal peptide spans 1–20 (MGFITKAIPLALAAASVING). The propeptide occupies 21–119 (AEILETRAGV…IERDARVQIN (99 aa)). An Inhibitor I9 domain is found at 36 to 118 (KYIVVMNDGI…YIERDARVQI (83 aa)). The Peptidase S8 domain occupies 129–400 (SWGLARVGSK…SKLINNGSGM (272 aa)). Active-site charge relay system residues include D161 and H192. N-linked (GlcNAc...) asparagine glycosylation is present at N252. The active-site Charge relay system is S346. An N-linked (GlcNAc...) asparagine glycan is attached at N396.

Belongs to the peptidase S8 family.

The protein resides in the secreted. In terms of biological role, secreted subtilisin-like serine protease with keratinolytic activity that contributes to pathogenicity. The polypeptide is Subtilisin-like protease 7 (SUB7) (Trichophyton violaceum).